We begin with the raw amino-acid sequence, 687 residues long: MAHLIEAAPNPHQPFVVTAGVAVGAAMRELELPNKGPEAIVCVKDSEGTLRDLSFVPEQDSKFTPVPANTEDGRTVIRHSCTHVLAQAVQAEFPGTKLGIGPAIENGFYYDFDVAEPFTPEDLQKLEKRMKKIVKQGQKFERRIFASVAEAEEALKNEPYKLELIRDKGNVDPGSDEATEIGAGDLTGYYNVNPRTGEVDWYDLCRGPHVPTTKYIPAFALTRSSAAYWRGDQSLAGLQRIYGTAWESKEALEEYQLMMAEAEKRDHRRLGAELDLFSFPDEIGSGFPVFHPNGGIVRLEMEEHSRRRHINAGYSFVNTPHITKGDLFKKSGHLDFYADGMFPPMQLDGEVDEEGNVVKQAQDYYAKPMNCPMHNLIFASRGRSYRELPLRLFEFGTVYRYEKSGVIHGLTRARGFTQDDAHIYCTEDQLEQELTSVLDFIISLLRDYGLDDFYLELSTKDPNKFVGSDEIWEKSTSILQRVATKSGLELVPDPAGAAFYGPKISVQARDAIGRTWQMSTVQLDFNLPERFNLEYTSSDGSKKRPIMIHRALFGSIERFFGVLLEHYAGAFPAWLAPHQVIGIPVADSFSEHLEKVTGMLRDNGVRASVDTSDDRMQKKIRNHTTGKVPFMLLAGARDVEANAVSFRFLDGTQINGVPVDKAIGVITQWISSRNNKQPSEETVKKLV.

One can recognise a TGS domain in the interval 1 to 67 (MAHLIEAAPN…EQDSKFTPVP (67 aa)). The catalytic stretch occupies residues 266–572 (DHRRLGAELD…LLEHYAGAFP (307 aa)). Residues C371, H422, and H549 each coordinate Zn(2+).

This sequence belongs to the class-II aminoacyl-tRNA synthetase family. As to quaternary structure, homodimer. Zn(2+) serves as cofactor.

The protein localises to the cytoplasm. The catalysed reaction is tRNA(Thr) + L-threonine + ATP = L-threonyl-tRNA(Thr) + AMP + diphosphate + H(+). Catalyzes the attachment of threonine to tRNA(Thr) in a two-step reaction: L-threonine is first activated by ATP to form Thr-AMP and then transferred to the acceptor end of tRNA(Thr). Also edits incorrectly charged L-seryl-tRNA(Thr). The chain is Threonine--tRNA ligase from Corynebacterium diphtheriae (strain ATCC 700971 / NCTC 13129 / Biotype gravis).